A 210-amino-acid polypeptide reads, in one-letter code: Oxygen-insensitive NADPH nitroreductase (210 aa).

150-155 (GVSLMG) is an NADP(+) binding site.

The protein belongs to the nitroreductase family.

Its function is as follows. Reduction of a variety of nitroaromatic compounds using NADPH as source of reducing equivalents; two electrons are transferred. The protein is Oxygen-insensitive NADPH nitroreductase (rdxA) of Helicobacter pylori (strain J99 / ATCC 700824) (Campylobacter pylori J99).